The chain runs to 116 residues: Large ribosomal subunit protein bL19 (116 aa).

Belongs to the bacterial ribosomal protein bL19 family.

In terms of biological role, this protein is located at the 30S-50S ribosomal subunit interface and may play a role in the structure and function of the aminoacyl-tRNA binding site. The sequence is that of Large ribosomal subunit protein bL19 from Chloroflexus aggregans (strain MD-66 / DSM 9485).